Consider the following 283-residue polypeptide: Fructose-1,6-bisphosphatase class 1 (283 aa).

Mg(2+) contacts are provided by Glu-67, Asp-86, Leu-88, and Asp-89. Substrate-binding positions include 89 to 92 (DGSS), Tyr-195, and Lys-225. Mg(2+) is bound at residue Glu-231.

This sequence belongs to the FBPase class 1 family. In terms of assembly, homotetramer. Mg(2+) is required as a cofactor.

The protein resides in the cytoplasm. The enzyme catalyses beta-D-fructose 1,6-bisphosphate + H2O = beta-D-fructose 6-phosphate + phosphate. It functions in the pathway carbohydrate biosynthesis; gluconeogenesis. The chain is Fructose-1,6-bisphosphatase class 1 from Natronomonas pharaonis (strain ATCC 35678 / DSM 2160 / CIP 103997 / JCM 8858 / NBRC 14720 / NCIMB 2260 / Gabara) (Halobacterium pharaonis).